We begin with the raw amino-acid sequence, 337 residues long: Anthranilate phosphoribosyltransferase (337 aa).

Residues Gly80, 83–84, Thr88, 90–93, 108–116, and Ser120 contribute to the 5-phospho-alpha-D-ribose 1-diphosphate site; these read GD, NIST, and KHGNRAVSS. Residue Gly80 coordinates anthranilate. Position 92 (Ser92) interacts with Mg(2+). Anthranilate is bound at residue Asn111. Anthranilate is bound at residue Arg166. 2 residues coordinate Mg(2+): Asp224 and Glu225.

The protein belongs to the anthranilate phosphoribosyltransferase family. In terms of assembly, homodimer. It depends on Mg(2+) as a cofactor.

The enzyme catalyses N-(5-phospho-beta-D-ribosyl)anthranilate + diphosphate = 5-phospho-alpha-D-ribose 1-diphosphate + anthranilate. Its pathway is amino-acid biosynthesis; L-tryptophan biosynthesis; L-tryptophan from chorismate: step 2/5. Functionally, catalyzes the transfer of the phosphoribosyl group of 5-phosphorylribose-1-pyrophosphate (PRPP) to anthranilate to yield N-(5'-phosphoribosyl)-anthranilate (PRA). The protein is Anthranilate phosphoribosyltransferase of Anaeromyxobacter dehalogenans (strain 2CP-1 / ATCC BAA-258).